The primary structure comprises 95 residues: Small ubiquitin-related modifier 2 (95 aa).

Residue Met-1 forms a Peptide (Met-Gly) (interchain with G-Cter in ubiquitin) linkage. Residues Lys-5 and Lys-7 each participate in a glycyl lysine isopeptide (Lys-Gly) (interchain with G-Cter in SUMO2) cross-link. Lys-11 carries the N6-acetyllysine; alternate modification. Lys-11 is covalently cross-linked (Glycyl lysine isopeptide (Lys-Gly) (interchain with G-Cter in SUMO); alternate). Lys-11 participates in a covalent cross-link: Glycyl lysine isopeptide (Lys-Gly) (interchain with G-Cter in SUMO1); alternate. Lys-11 is covalently cross-linked (Glycyl lysine isopeptide (Lys-Gly) (interchain with G-Cter in SUMO2); alternate). Residue Lys-11 forms a Glycyl lysine isopeptide (Lys-Gly) (interchain with G-Cter in ubiquitin); alternate linkage. Residues 16–95 (DHINLKVAGQ…VFQQQTGGVY (80 aa)) form the Ubiquitin-like domain. Lys-21 participates in a covalent cross-link: Glycyl lysine isopeptide (Lys-Gly) (interchain with G-Cter in SUMO2). Gly-93 is covalently cross-linked (Glycyl lysine isopeptide (Gly-Lys) (interchain with K-? in acceptor proteins)). The propeptide occupies 94 to 95 (VY).

The protein belongs to the ubiquitin family. SUMO subfamily. Interacts with SAE2 and UBE2I. Interacts with ZNF451. Identified in a complex with ZNF451 and UBE2I/UBC9, where one ZNF451 interacts with one UBE2I/UBC9 and two SUMO2 chains, one bound to the UBE2I/UBC9 active site and the other to another region of the same UBE2I/UBC9 molecule. Covalently attached to a number of proteins. Interacts with PELP1. Interacts with USP25; the interaction sumoylates USP25. Interacts with SIMC1, CASP8AP2, RNF111 and SOBP (via SIM domains). Interacts with MTA1. Interacts with HINT1. Interacts with GCNA (via SIM domains); this interaction allows the GCNA recruitment to DPCs sites. Post-translationally, polymeric chains can be formed through Lys-11 cross-linking. Polymeric SUMO2 chains undergo 'Lys-6'-, 'Lys-11'-, 'Lys-48'- and 'Lys-63'-linked polyubiquitination by RNF4. Cleavage of precursor form by SENP1 or SENP2 is necessary for function. In terms of processing, monoubiquitinated N-terminally by UBE2W, which primes it for RNF4-dependent polyubiquitination by the UBE2V1-UBE2N heterodimer.

The protein localises to the nucleus. Its subcellular location is the PML body. Functionally, ubiquitin-like protein that can be covalently attached to proteins as a monomer or as a lysine-linked polymer. Covalent attachment via an isopeptide bond to its substrates requires prior activation by the E1 complex SAE1-SAE2 and linkage to the E2 enzyme UBE2I, and can be promoted by an E3 ligase such as PIAS1-4, RANBP2 or CBX4. This post-translational modification on lysine residues of proteins plays a crucial role in a number of cellular processes such as nuclear transport, DNA replication and repair, mitosis and signal transduction. Polymeric SUMO2 chains are also susceptible to polyubiquitination which functions as a signal for proteasomal degradation of modified proteins. Plays a role in the regulation of sumoylation status of SETX. The polypeptide is Small ubiquitin-related modifier 2 (Bos taurus (Bovine)).